We begin with the raw amino-acid sequence, 558 residues long: Dihydroxy-acid dehydratase (558 aa).

Cys51 serves as a coordination point for [2Fe-2S] cluster. Residue Asp83 coordinates Mg(2+). [2Fe-2S] cluster is bound at residue Cys124. Residues Asp125 and Lys126 each coordinate Mg(2+). The residue at position 126 (Lys126) is an N6-carboxylysine. [2Fe-2S] cluster is bound at residue Cys196. Glu447 is a Mg(2+) binding site. Ser473 serves as the catalytic Proton acceptor.

The protein belongs to the IlvD/Edd family. Homodimer. [2Fe-2S] cluster serves as cofactor. Mg(2+) is required as a cofactor.

It carries out the reaction (2R)-2,3-dihydroxy-3-methylbutanoate = 3-methyl-2-oxobutanoate + H2O. The enzyme catalyses (2R,3R)-2,3-dihydroxy-3-methylpentanoate = (S)-3-methyl-2-oxopentanoate + H2O. Its pathway is amino-acid biosynthesis; L-isoleucine biosynthesis; L-isoleucine from 2-oxobutanoate: step 3/4. The protein operates within amino-acid biosynthesis; L-valine biosynthesis; L-valine from pyruvate: step 3/4. In terms of biological role, functions in the biosynthesis of branched-chain amino acids. Catalyzes the dehydration of (2R,3R)-2,3-dihydroxy-3-methylpentanoate (2,3-dihydroxy-3-methylvalerate) into 2-oxo-3-methylpentanoate (2-oxo-3-methylvalerate) and of (2R)-2,3-dihydroxy-3-methylbutanoate (2,3-dihydroxyisovalerate) into 2-oxo-3-methylbutanoate (2-oxoisovalerate), the penultimate precursor to L-isoleucine and L-valine, respectively. This chain is Dihydroxy-acid dehydratase, found in Flavobacterium psychrophilum (strain ATCC 49511 / DSM 21280 / CIP 103535 / JIP02/86).